Here is a 366-residue protein sequence, read N- to C-terminus: Probable quinol oxidase subunit 2 (366 aa).

An N-terminal signal peptide occupies residues 1-19 (MSKFKSLLLLFGTLILLSG). Cys20 carries N-palmitoyl cysteine lipidation. A lipid anchor (S-diacylglycerol cysteine) is attached at Cys20. A run of 2 helical transmembrane segments spans residues 38–58 (FLILYSIVFMLVICFVVLGMF) and 80–100 (AIIETIWFVIPIIIVAALAIP). Residues 330-366 (EPYNNEFKKDESKNAKEMKKISKDAQDQDNDDHGGGH) are disordered. Residues 335-366 (EFKKDESKNAKEMKKISKDAQDQDNDDHGGGH) show a composition bias toward basic and acidic residues.

It belongs to the cytochrome c oxidase subunit 2 family.

The protein localises to the cell membrane. The catalysed reaction is 2 a quinol + O2 = 2 a quinone + 2 H2O. Functionally, catalyzes quinol oxidation with the concomitant reduction of oxygen to water. Subunit II transfers the electrons from a quinol to the binuclear center of the catalytic subunit I. The sequence is that of Probable quinol oxidase subunit 2 (qoxA) from Staphylococcus aureus (strain bovine RF122 / ET3-1).